A 362-amino-acid chain; its full sequence is DNA replication and repair protein RecF (362 aa).

Position 30–37 (Gly30–Thr37) interacts with ATP.

The protein belongs to the RecF family.

Its subcellular location is the cytoplasm. In terms of biological role, the RecF protein is involved in DNA metabolism; it is required for DNA replication and normal SOS inducibility. RecF binds preferentially to single-stranded, linear DNA. It also seems to bind ATP. The protein is DNA replication and repair protein RecF of Xanthomonas oryzae pv. oryzae (strain MAFF 311018).